We begin with the raw amino-acid sequence, 972 residues long: Translation initiation factor IF-2 (972 aa).

Positions Asp-48–Lys-63 are enriched in basic and acidic residues. Disordered regions lie at residues Asp-48–Thr-85 and Arg-99–Thr-385. Residues Gly-105–Ala-114 are compositionally biased toward low complexity. The segment covering Glu-121–Ala-181 has biased composition (basic and acidic residues). Over residues Ala-182–Ala-205 the composition is skewed to low complexity. Residues Asp-212–Arg-263 show a composition bias toward basic and acidic residues. Residues Pro-279–Pro-288 are compositionally biased toward pro residues. Over residues Pro-313–Gly-328 the composition is skewed to low complexity. Residues Ser-357–Lys-370 show a composition bias toward gly residues. In terms of domain architecture, tr-type G spans Pro-472–Lys-641. Positions Gly-481 to Thr-488 are G1. GTP is bound at residue Gly-481 to Thr-488. The interval Gly-506–His-510 is G2. A G3 region spans residues Asp-527–Gly-530. Residues Asp-527–His-531 and Asn-581–Asp-584 each bind GTP. The interval Asn-581–Asp-584 is G4. A G5 region spans residues Ser-617–Lys-619.

It belongs to the TRAFAC class translation factor GTPase superfamily. Classic translation factor GTPase family. IF-2 subfamily.

It localises to the cytoplasm. In terms of biological role, one of the essential components for the initiation of protein synthesis. Protects formylmethionyl-tRNA from spontaneous hydrolysis and promotes its binding to the 30S ribosomal subunits. Also involved in the hydrolysis of GTP during the formation of the 70S ribosomal complex. This chain is Translation initiation factor IF-2, found in Burkholderia lata (strain ATCC 17760 / DSM 23089 / LMG 22485 / NCIMB 9086 / R18194 / 383).